The primary structure comprises 231 residues: 2-C-methyl-D-erythritol 4-phosphate cytidylyltransferase (231 aa).

The protein belongs to the IspD/TarI cytidylyltransferase family. IspD subfamily.

It carries out the reaction 2-C-methyl-D-erythritol 4-phosphate + CTP + H(+) = 4-CDP-2-C-methyl-D-erythritol + diphosphate. It functions in the pathway isoprenoid biosynthesis; isopentenyl diphosphate biosynthesis via DXP pathway; isopentenyl diphosphate from 1-deoxy-D-xylulose 5-phosphate: step 2/6. Catalyzes the formation of 4-diphosphocytidyl-2-C-methyl-D-erythritol from CTP and 2-C-methyl-D-erythritol 4-phosphate (MEP). This chain is 2-C-methyl-D-erythritol 4-phosphate cytidylyltransferase, found in Shewanella piezotolerans (strain WP3 / JCM 13877).